The following is a 349-amino-acid chain: Green-sensitive opsin-4 (349 aa).

The Extracellular segment spans residues 1-36 (MNGTEGNNFYIPLSNRTGLARSPYEYPQYYLAEPWQ). N-linked (GlcNAc...) asparagine glycosylation is found at asparagine 2 and asparagine 15. The helical transmembrane segment at 37 to 61 (FKLLAVYMFFLICLGFPINGLTLLV) threads the bilayer. The Cytoplasmic portion of the chain corresponds to 62–73 (TAQHKKLRQPLN). Residues 74 to 99 (FILVNLAVAGTIMVCFGFTVTFYTAI) traverse the membrane as a helical segment. The Extracellular segment spans residues 100–113 (NGYFVLGPTGCAIE). A disulfide bridge links cysteine 110 with cysteine 187. Residues 114–133 (GFMATLGGEVALWSLVVLAV) form a helical membrane-spanning segment. The Cytoplasmic segment spans residues 134–152 (ERYIVVCKPMGSFKFSASH). Residues 153-176 (AFAGCAFTWVMAMACAAPPLVGWS) traverse the membrane as a helical segment. The Extracellular segment spans residues 177 to 202 (RYIPEGMQCSCGPDYYTLNPEYNNES). Asparagine 200 carries an N-linked (GlcNAc...) asparagine glycan. The chain crosses the membrane as a helical span at residues 203 to 230 (YVLYMFICHFILPVTIIFFTYGRLVCTV). Topologically, residues 231–252 (KAAAAQQQESESTQKAEREVTR) are cytoplasmic. A helical membrane pass occupies residues 253–276 (MVILMVLGFLIAWTPYATVAAWIF). Topologically, residues 277–284 (FNKGAAFS) are extracellular. The helical transmembrane segment at 285-309 (AQFMAVPAFFSKTSALYNPVIYVLL) threads the bilayer. Lysine 296 is modified (N6-(retinylidene)lysine). Residues 310–349 (NKQFRNCMLTTLFCGKNPLGDDESSTVSTSKTEVSSVSPA) lie on the Cytoplasmic side of the membrane. The segment at 329 to 349 (GDDESSTVSTSKTEVSSVSPA) is disordered. Over residues 334–349 (STVSTSKTEVSSVSPA) the composition is skewed to low complexity.

It belongs to the G-protein coupled receptor 1 family. Opsin subfamily. In terms of processing, phosphorylated on some or all of the serine and threonine residues present in the C-terminal region. As to expression, retinal double cone accessory photoreceptor cell outer segments.

The protein resides in the membrane. In terms of biological role, visual pigments are the light-absorbing molecules that mediate vision. They consist of an apoprotein, opsin, covalently linked to cis-retinal. The polypeptide is Green-sensitive opsin-4 (opn1mw4) (Danio rerio (Zebrafish)).